The sequence spans 186 residues: Shikimate kinase (186 aa).

An ATP-binding site is contributed by 21–26 (GVGKTT). Thr25 contributes to the Mg(2+) binding site. Positions 43, 67, and 90 each coordinate substrate. ATP is bound at residue Arg129. Position 147 (Arg147) interacts with substrate.

It belongs to the shikimate kinase family. As to quaternary structure, monomer. Requires Mg(2+) as cofactor.

The protein resides in the cytoplasm. The enzyme catalyses shikimate + ATP = 3-phosphoshikimate + ADP + H(+). The protein operates within metabolic intermediate biosynthesis; chorismate biosynthesis; chorismate from D-erythrose 4-phosphate and phosphoenolpyruvate: step 5/7. Catalyzes the specific phosphorylation of the 3-hydroxyl group of shikimic acid using ATP as a cosubstrate. This is Shikimate kinase from Bacillus subtilis (strain 168).